Consider the following 662-residue polypeptide: Probable quinol oxidase subunit 1 (662 aa).

A run of 2 helical transmembrane segments spans residues 14–34 (WMIT…IAVI) and 58–78 (VMYL…ALLI). H102 contributes to the Fe(II)-heme a binding site. 8 helical membrane passes run 103 to 123 (GVIM…NIVV), 140 to 160 (VSFW…IIGG), 187 to 207 (IAIQ…FVTI), 228 to 248 (FITT…LALM), 273 to 293 (FFWV…FGIY), 311 to 331 (MVWA…HHFF), 336 to 356 (GALI…PTGV), and 376 to 396 (MLFS…GVML). Cu cation contacts are provided by H279, Y283, H328, and H329. Positions 279–283 (HPEVY) form a cross-link, 1'-histidyl-3'-tyrosine (His-Tyr). H414 contributes to the heme a3 binding site. Helical transmembrane passes span 415–435 (FHYT…IFWY), 451–471 (CFWF…ILGL), 493–513 (ISTI…VSIV), 587–604 (PVGF…FFLI), and 608–627 (VIPA…YRSF). H416 is a binding site for Fe(II)-heme a.

It belongs to the heme-copper respiratory oxidase family. Requires Cu cation as cofactor. Ferriheme a serves as cofactor. The cofactor is Heme A3..

The protein resides in the cell membrane. It carries out the reaction 2 a quinol + O2 = 2 a quinone + 2 H2O. The protein operates within energy metabolism; oxidative phosphorylation. Its function is as follows. Catalyzes quinol oxidation with the concomitant reduction of oxygen to water. This is Probable quinol oxidase subunit 1 (qoxB) from Staphylococcus aureus (strain COL).